Consider the following 180-residue polypeptide: Dual-action ribosomal maturation protein DarP (180 aa).

Belongs to the DarP family.

It is found in the cytoplasm. Its function is as follows. Member of a network of 50S ribosomal subunit biogenesis factors which assembles along the 30S-50S interface, preventing incorrect 23S rRNA structures from forming. Promotes peptidyl transferase center (PTC) maturation. This is Dual-action ribosomal maturation protein DarP from Chromobacterium violaceum (strain ATCC 12472 / DSM 30191 / JCM 1249 / CCUG 213 / NBRC 12614 / NCIMB 9131 / NCTC 9757 / MK).